Reading from the N-terminus, the 150-residue chain is UPF0178 protein BceJ2315_16760 (150 aa).

It belongs to the UPF0178 family.

This Burkholderia cenocepacia (strain ATCC BAA-245 / DSM 16553 / LMG 16656 / NCTC 13227 / J2315 / CF5610) (Burkholderia cepacia (strain J2315)) protein is UPF0178 protein BceJ2315_16760.